A 421-amino-acid polypeptide reads, in one-letter code: Acyl-coenzyme A thioesterase 1 (421 aa).

Active-site charge relay system residues include Ser232, Asp326, and His360.

This sequence belongs to the C/M/P thioester hydrolase family. As to quaternary structure, monomer.

The protein resides in the cytoplasm. Its subcellular location is the cytosol. The enzyme catalyses hexadecanoyl-CoA + H2O = hexadecanoate + CoA + H(+). The catalysed reaction is decanoyl-CoA + H2O = decanoate + CoA + H(+). It carries out the reaction dodecanoyl-CoA + H2O = dodecanoate + CoA + H(+). It catalyses the reaction tetradecanoyl-CoA + H2O = tetradecanoate + CoA + H(+). The enzyme catalyses octadecanoyl-CoA + H2O = octadecanoate + CoA + H(+). The catalysed reaction is eicosanoyl-CoA + H2O = eicosanoate + CoA + H(+). It carries out the reaction (9Z)-octadecenoyl-CoA + H2O = (9Z)-octadecenoate + CoA + H(+). It catalyses the reaction (9Z)-hexadecenoyl-CoA + H2O = (9Z)-hexadecenoate + CoA + H(+). The enzyme catalyses (9E)-octadecenoyl-CoA + H2O = (9E)-octadecenoate + CoA + H(+). It functions in the pathway lipid metabolism; fatty acid metabolism. Catalyzes the hydrolysis of acyl-CoAs into free fatty acids and coenzyme A (CoASH), regulating their respective intracellular levels. More active towards saturated and unsaturated long chain fatty acyl-CoAs (C12-C20). This chain is Acyl-coenzyme A thioesterase 1 (ACOT1), found in Homo sapiens (Human).